Reading from the N-terminus, the 360-residue chain is UDP-3-O-acylglucosamine N-acyltransferase (360 aa).

Histidine 253 (proton acceptor) is an active-site residue.

The protein belongs to the transferase hexapeptide repeat family. LpxD subfamily. In terms of assembly, homotrimer.

It carries out the reaction a UDP-3-O-[(3R)-3-hydroxyacyl]-alpha-D-glucosamine + a (3R)-hydroxyacyl-[ACP] = a UDP-2-N,3-O-bis[(3R)-3-hydroxyacyl]-alpha-D-glucosamine + holo-[ACP] + H(+). It participates in bacterial outer membrane biogenesis; LPS lipid A biosynthesis. In terms of biological role, catalyzes the N-acylation of UDP-3-O-acylglucosamine using 3-hydroxyacyl-ACP as the acyl donor. Is involved in the biosynthesis of lipid A, a phosphorylated glycolipid that anchors the lipopolysaccharide to the outer membrane of the cell. In Burkholderia multivorans (strain ATCC 17616 / 249), this protein is UDP-3-O-acylglucosamine N-acyltransferase.